Here is a 192-residue protein sequence, read N- to C-terminus: Superoxide dismutase [Fe] (192 aa).

4 residues coordinate Fe cation: His26, His73, Asp157, and His161.

Belongs to the iron/manganese superoxide dismutase family. As to quaternary structure, homodimer. Fe cation serves as cofactor.

It carries out the reaction 2 superoxide + 2 H(+) = H2O2 + O2. Destroys superoxide anion radicals which are normally produced within the cells and which are toxic to biological systems. In Pseudoalteromonas translucida (strain TAC 125), this protein is Superoxide dismutase [Fe].